Reading from the N-terminus, the 257-residue chain is MTQHSRDTPQFYLTAPSPCPYLPGRHERKVFTHLVGNKAGELNDLLTHGGFRRSQSIAYRPACDQCRSCVSVRVIANEFRASRNQRKILARNADIVGEQRNPVPTSEQYSVFRAYLDQRHRHGGMADMTVLDYAMMVEDSHVETRIIEYRKRTLDTGITGRGGDLVAAALTDVLNDGLSMVYSFYEPGEQNRSLGTFMILDHIARARRLGLPYVYLGYWIEGSKKMDYKGRYLPQQRLAPSGWIRVDASGEYPEPQD.

Belongs to the R-transferase family. Bpt subfamily.

It is found in the cytoplasm. It catalyses the reaction N-terminal L-glutamyl-[protein] + L-leucyl-tRNA(Leu) = N-terminal L-leucyl-L-glutamyl-[protein] + tRNA(Leu) + H(+). The catalysed reaction is N-terminal L-aspartyl-[protein] + L-leucyl-tRNA(Leu) = N-terminal L-leucyl-L-aspartyl-[protein] + tRNA(Leu) + H(+). In terms of biological role, functions in the N-end rule pathway of protein degradation where it conjugates Leu from its aminoacyl-tRNA to the N-termini of proteins containing an N-terminal aspartate or glutamate. The sequence is that of Aspartate/glutamate leucyltransferase from Rhodopseudomonas palustris (strain BisB5).